The sequence spans 507 residues: Glucose-6-phosphate isomerase (507 aa).

Catalysis depends on glutamate 338, which acts as the Proton donor. Residues histidine 369 and lysine 479 contribute to the active site.

It belongs to the GPI family.

The protein localises to the cytoplasm. The enzyme catalyses alpha-D-glucose 6-phosphate = beta-D-fructose 6-phosphate. Its pathway is carbohydrate biosynthesis; gluconeogenesis. The protein operates within carbohydrate degradation; glycolysis; D-glyceraldehyde 3-phosphate and glycerone phosphate from D-glucose: step 2/4. Provides a gateway for fructose into the Entner-Doudouroff pathway. Functionally, catalyzes the reversible isomerization of glucose-6-phosphate to fructose-6-phosphate. The protein is Glucose-6-phosphate isomerase of Zymomonas mobilis subsp. mobilis (strain ATCC 31821 / ZM4 / CP4).